A 298-amino-acid chain; its full sequence is uncharacterized protein (298 aa).

The next 9 membrane-spanning stretches (helical) occupy residues 10 to 30, 36 to 56, 76 to 96, 101 to 121, 142 to 162, 179 to 199, 212 to 232, 243 to 263, and 271 to 291; these read VIYTAVSFIMWGLFPLYWKLL, LDILAHRIIWSFVFMCIVLFF, ILSLFLASILISINWFVYIWA, FLLEASLGYYINPLVSVLLGI, GVIISAFQYGSIPYVALLLAF, AIGLTLETFMIMPIALGYLLF, GTWLLLFLAGVFTALPLLLFA, VGILQYIAPTITLLIGLFVYH, and AFTFSCIWAALLLFTFSQVKW. EamA domains are found at residues 17 to 148 and 162 to 286; these read FIMW…ISAF and FSFG…LFTF.

The protein belongs to the EamA transporter family.

The protein resides in the cell membrane. This is an uncharacterized protein from Bacillus subtilis (strain 168).